Reading from the N-terminus, the 294-residue chain is Protoheme IX farnesyltransferase (294 aa).

A run of 9 helical transmembrane segments spans residues 24-44 (VVLLMLLTVIVGMYLAAPGWV), 48-68 (LIAFTLLGIGLCAGSAAAINH), 96-116 (ALWFAVIIGLMGLSLLILFVN), 118-138 (LTALLTFITLIGYAGVYTGYL), 145-165 (NIVIGGLAGAAPPLLGWTAVT), 172-192 (ALLLVLIIFTWTPPHFWALAI), 211-231 (GIQFTKLNIYLYTVLLLVVSL), 241-263 (WIYLLGALILGIRFLVWAHKLYF), and 268-288 (VVAMQTFRFSILYLMLLFVFL).

The protein belongs to the UbiA prenyltransferase family. Protoheme IX farnesyltransferase subfamily.

The protein resides in the cell inner membrane. The enzyme catalyses heme b + (2E,6E)-farnesyl diphosphate + H2O = Fe(II)-heme o + diphosphate. Its pathway is porphyrin-containing compound metabolism; heme O biosynthesis; heme O from protoheme: step 1/1. Its function is as follows. Converts heme B (protoheme IX) to heme O by substitution of the vinyl group on carbon 2 of heme B porphyrin ring with a hydroxyethyl farnesyl side group. The polypeptide is Protoheme IX farnesyltransferase (Legionella pneumophila (strain Lens)).